Consider the following 267-residue polypeptide: Undecaprenyl-diphosphatase (267 aa).

A run of 7 helical transmembrane segments spans residues 39 to 59 (QGLA…ILYF), 87 to 107 (WMIA…KDFI), 111 to 131 (LRSA…LWWV), 149 to 169 (ALFI…RSGA), 189 to 209 (FLMS…KLVT), 218 to 238 (ALSI…HAFL), and 244 to 264 (VGMM…IAFL).

It belongs to the UppP family.

It is found in the cell inner membrane. The enzyme catalyses di-trans,octa-cis-undecaprenyl diphosphate + H2O = di-trans,octa-cis-undecaprenyl phosphate + phosphate + H(+). In terms of biological role, catalyzes the dephosphorylation of undecaprenyl diphosphate (UPP). Confers resistance to bacitracin. The polypeptide is Undecaprenyl-diphosphatase (Photobacterium profundum (strain SS9)).